A 225-amino-acid chain; its full sequence is Enolase-phosphatase E1 (225 aa).

The protein belongs to the HAD-like hydrolase superfamily. MasA/MtnC family. In terms of assembly, monomer. The cofactor is Mg(2+).

It carries out the reaction 5-methylsulfanyl-2,3-dioxopentyl phosphate + H2O = 1,2-dihydroxy-5-(methylsulfanyl)pent-1-en-3-one + phosphate. The protein operates within amino-acid biosynthesis; L-methionine biosynthesis via salvage pathway; L-methionine from S-methyl-5-thio-alpha-D-ribose 1-phosphate: step 3/6. It functions in the pathway amino-acid biosynthesis; L-methionine biosynthesis via salvage pathway; L-methionine from S-methyl-5-thio-alpha-D-ribose 1-phosphate: step 4/6. In terms of biological role, bifunctional enzyme that catalyzes the enolization of 2,3-diketo-5-methylthiopentyl-1-phosphate (DK-MTP-1-P) into the intermediate 2-hydroxy-3-keto-5-methylthiopentenyl-1-phosphate (HK-MTPenyl-1-P), which is then dephosphorylated to form the acireductone 1,2-dihydroxy-3-keto-5-methylthiopentene (DHK-MTPene). This chain is Enolase-phosphatase E1, found in Shewanella loihica (strain ATCC BAA-1088 / PV-4).